The following is a 275-amino-acid chain: Lectin 8 (275 aa).

The N-terminal stretch at Met-1–Ser-31 is a signal peptide. N-linked (GlcNAc...) asparagine glycans are attached at residues Asn-55 and Asn-150.

This sequence belongs to the leguminous lectin family.

Its function is as follows. May be involved in arbuscular mycorrhizal (AM) symbiosis with AM fungi. This is Lectin 8 from Medicago truncatula (Barrel medic).